We begin with the raw amino-acid sequence, 482 residues long: Serine decarboxylase 1 (482 aa).

A disordered region spans residues 36 to 55 (EVESPPRPAEEEGEGSPTRR). Histidine 200 is a binding site for substrate. Lysine 312 is subject to N6-(pyridoxal phosphate)lysine.

This sequence belongs to the group II decarboxylase family. It depends on pyridoxal 5'-phosphate as a cofactor.

The catalysed reaction is L-serine + H(+) = ethanolamine + CO2. Its function is as follows. Catalyzes the biosynthesis of ethanolamine from serine. Decarboxylation of free serine is the major source of ethanolamine production in plants and ethanolamine metabolism is crucial for the synthesis of choline, phosphatidylethanolamine (PE) and phosphatidylcholine (PC), and thus for plant growth. This Oryza sativa subsp. japonica (Rice) protein is Serine decarboxylase 1 (SDC1).